The sequence spans 127 residues: Fatty acid binding protein 1-A, liver (127 aa).

Belongs to the calycin superfamily. Fatty-acid binding protein (FABP) family. In adults, weakly expressed in the intestine.

It localises to the cytoplasm. Binds free fatty acids and their coenzyme A derivatives, bilirubin, and some other small molecules in the cytoplasm. May be involved in intracellular lipid transport. This is Fatty acid binding protein 1-A, liver from Danio rerio (Zebrafish).